A 357-amino-acid chain; its full sequence is Probable cinnamyl alcohol dehydrogenase (357 aa).

Cysteine 47 contributes to the Zn(2+) binding site. Threonine 49 provides a ligand contact to NADP(+). 7 residues coordinate Zn(2+): histidine 69, glutamate 70, cysteine 100, cysteine 103, cysteine 106, cysteine 114, and cysteine 163. Residues threonine 167, 188 to 193 (GLGGVG), 211 to 216 (SSSDKK), threonine 251, glycine 275, and 298 to 300 (SFI) each bind NADP(+).

It belongs to the zinc-containing alcohol dehydrogenase family. Homodimer. Zn(2+) serves as cofactor.

The catalysed reaction is (E)-cinnamyl alcohol + NADP(+) = (E)-cinnamaldehyde + NADPH + H(+). It catalyses the reaction (E)-coniferol + NADP(+) = (E)-coniferaldehyde + NADPH + H(+). The enzyme catalyses (E)-sinapyl alcohol + NADP(+) = (E)-sinapaldehyde + NADPH + H(+). It carries out the reaction (E)-4-coumaroyl alcohol + NADP(+) = (E)-4-coumaraldehyde + NADPH + H(+). The catalysed reaction is (E)-caffeyl alcohol + NADP(+) = (E)-caffeyl aldehyde + NADPH + H(+). Its pathway is aromatic compound metabolism; phenylpropanoid biosynthesis. Its function is as follows. Involved in lignin biosynthesis. Catalyzes the final step specific for the production of lignin monomers. Catalyzes the NADPH-dependent reduction of coniferaldehyde, 5-hydroxyconiferaldehyde, sinapaldehyde, 4-coumaraldehyde and caffeyl aldehyde to their respective alcohols. The sequence is that of Probable cinnamyl alcohol dehydrogenase from Populus deltoides (Eastern poplar).